The sequence spans 240 residues: Uridylate kinase (240 aa).

12–15 (KLSG) provides a ligand contact to ATP. The tract at residues 20–25 (GEKGFG) is involved in allosteric activation by GTP. Gly-54 is a binding site for UMP. The ATP site is built by Gly-55 and Arg-59. Residues Asp-74 and 135 to 142 (TGSPYFST) contribute to the UMP site. ATP is bound by residues Asn-163, Tyr-169, and Asp-172.

Belongs to the UMP kinase family. As to quaternary structure, homohexamer.

The protein resides in the cytoplasm. The enzyme catalyses UMP + ATP = UDP + ADP. The protein operates within pyrimidine metabolism; CTP biosynthesis via de novo pathway; UDP from UMP (UMPK route): step 1/1. With respect to regulation, allosterically activated by GTP. Inhibited by UTP. Catalyzes the reversible phosphorylation of UMP to UDP. The chain is Uridylate kinase from Limosilactobacillus reuteri (Lactobacillus reuteri).